We begin with the raw amino-acid sequence, 255 residues long: 1-(5-phosphoribosyl)-5-[(5-phosphoribosylamino)methylideneamino] imidazole-4-carboxamide isomerase (255 aa).

Asp12 serves as the catalytic Proton acceptor. Asp131 functions as the Proton donor in the catalytic mechanism.

It belongs to the HisA/HisF family.

The protein localises to the cytoplasm. The catalysed reaction is 1-(5-phospho-beta-D-ribosyl)-5-[(5-phospho-beta-D-ribosylamino)methylideneamino]imidazole-4-carboxamide = 5-[(5-phospho-1-deoxy-D-ribulos-1-ylimino)methylamino]-1-(5-phospho-beta-D-ribosyl)imidazole-4-carboxamide. The protein operates within amino-acid biosynthesis; L-histidine biosynthesis; L-histidine from 5-phospho-alpha-D-ribose 1-diphosphate: step 4/9. This is 1-(5-phosphoribosyl)-5-[(5-phosphoribosylamino)methylideneamino] imidazole-4-carboxamide isomerase from Cutibacterium acnes (strain DSM 16379 / KPA171202) (Propionibacterium acnes).